Consider the following 584-residue polypeptide: A-type ATP synthase subunit A (584 aa).

233 to 240 (GPFGSGKT) is an ATP binding site.

This sequence belongs to the ATPase alpha/beta chains family. Has multiple subunits with at least A(3), B(3), C, D, E, F, H, I and proteolipid K(x).

The protein localises to the cell membrane. The catalysed reaction is ATP + H2O + 4 H(+)(in) = ADP + phosphate + 5 H(+)(out). Functionally, component of the A-type ATP synthase that produces ATP from ADP in the presence of a proton gradient across the membrane. The A chain is the catalytic subunit. This is A-type ATP synthase subunit A from Methanobrevibacter smithii (strain ATCC 35061 / DSM 861 / OCM 144 / PS).